Consider the following 322-residue polypeptide: Phosphate acetyltransferase (322 aa).

Belongs to the phosphate acetyltransferase and butyryltransferase family.

Its subcellular location is the cytoplasm. It carries out the reaction acetyl-CoA + phosphate = acetyl phosphate + CoA. Its pathway is metabolic intermediate biosynthesis; acetyl-CoA biosynthesis; acetyl-CoA from acetate: step 2/2. This is Phosphate acetyltransferase (pta) from Mycoplasma capricolum subsp. capricolum (strain California kid / ATCC 27343 / NCTC 10154).